The following is a 388-amino-acid chain: Protein kes1 (388 aa).

It belongs to the OSBP family.

Lipid transporter involved in lipid countertransport between the Golgi complex and membranes of the endoplasmic reticulum: specifically exchanges sterol with phosphatidylinositol 4-phosphate (PI4P), delivering sterol to the Golgi in exchange for PI4P, which is degraded by the SAC1 phosphatase in the endoplasmic reticulum. The chain is Protein kes1 (kes1) from Schizosaccharomyces pombe (strain 972 / ATCC 24843) (Fission yeast).